The primary structure comprises 248 residues: tRNA (guanine-N(1)-)-methyltransferase (248 aa).

S-adenosyl-L-methionine is bound by residues glycine 117 and 137–142 (IGDFVL).

This sequence belongs to the RNA methyltransferase TrmD family. Homodimer.

The protein resides in the cytoplasm. The enzyme catalyses guanosine(37) in tRNA + S-adenosyl-L-methionine = N(1)-methylguanosine(37) in tRNA + S-adenosyl-L-homocysteine + H(+). In terms of biological role, specifically methylates guanosine-37 in various tRNAs. The protein is tRNA (guanine-N(1)-)-methyltransferase of Polynucleobacter necessarius subsp. necessarius (strain STIR1).